Reading from the N-terminus, the 475-residue chain is Ribulose bisphosphate carboxylase large chain (475 aa).

Residues 1–2 (MS) constitute a propeptide that is removed on maturation. Pro-3 carries the N-acetylproline modification. Residue Lys-14 is modified to N6,N6,N6-trimethyllysine. Positions 123 and 173 each coordinate substrate. Residue Lys-175 is the Proton acceptor of the active site. Position 177 (Lys-177) interacts with substrate. Positions 201, 203, and 204 each coordinate Mg(2+). Lys-201 carries the post-translational modification N6-carboxylysine. The Proton acceptor role is filled by His-294. 3 residues coordinate substrate: Arg-295, His-327, and Ser-379.

This sequence belongs to the RuBisCO large chain family. Type I subfamily. Heterohexadecamer of 8 large chains and 8 small chains; disulfide-linked. The disulfide link is formed within the large subunit homodimers. Mg(2+) is required as a cofactor. In terms of processing, the disulfide bond which can form in the large chain dimeric partners within the hexadecamer appears to be associated with oxidative stress and protein turnover.

It is found in the plastid. The protein localises to the chloroplast. The catalysed reaction is 2 (2R)-3-phosphoglycerate + 2 H(+) = D-ribulose 1,5-bisphosphate + CO2 + H2O. The enzyme catalyses D-ribulose 1,5-bisphosphate + O2 = 2-phosphoglycolate + (2R)-3-phosphoglycerate + 2 H(+). RuBisCO catalyzes two reactions: the carboxylation of D-ribulose 1,5-bisphosphate, the primary event in carbon dioxide fixation, as well as the oxidative fragmentation of the pentose substrate in the photorespiration process. Both reactions occur simultaneously and in competition at the same active site. The polypeptide is Ribulose bisphosphate carboxylase large chain (Carica papaya (Papaya)).